Reading from the N-terminus, the 178-residue chain is HTH-type transcriptional regulator SutR (178 aa).

The HTH cro/C1-type domain maps to 12–66; sequence LKQLRQQRGWSLSRLAEATGVSKAMLGQIERNESSPTVATLWKIATGLNVPFSTF. A DNA-binding region (H-T-H motif) is located at residues 23 to 42; that stretch reads LSRLAEATGVSKAMLGQIER. Residues 105–171 form the Cupin type-2 domain; that stretch reads QMASGAISES…GGEQTVHFHS (67 aa).

Its function is as follows. Regulates the expression of 12-16 transcription units involved in various steps of sulfur utilization. Represses expression of pfkB, fliZ, cysE, ydcO and its own expression. Activates expression of ypfN. Acts by binding to SutR boxes. The sequence is that of HTH-type transcriptional regulator SutR from Escherichia coli (strain K12).